A 474-amino-acid polypeptide reads, in one-letter code: Ribulose bisphosphate carboxylase large chain (474 aa).

Substrate contacts are provided by Asn122 and Thr172. Lys174 functions as the Proton acceptor in the catalytic mechanism. A substrate-binding site is contributed by Lys176. Residues Lys200, Asp202, and Glu203 each coordinate Mg(2+). An N6-carboxylysine modification is found at Lys200. The active-site Proton acceptor is His293. Positions 294, 326, and 378 each coordinate substrate.

The protein belongs to the RuBisCO large chain family. Type I subfamily. As to quaternary structure, heterohexadecamer of 8 large chains and 8 small chains; disulfide-linked. The disulfide link is formed within the large subunit homodimers. Mg(2+) serves as cofactor. In terms of processing, the disulfide bond which can form in the large chain dimeric partners within the hexadecamer appears to be associated with oxidative stress and protein turnover.

It is found in the carboxysome. It carries out the reaction 2 (2R)-3-phosphoglycerate + 2 H(+) = D-ribulose 1,5-bisphosphate + CO2 + H2O. It catalyses the reaction D-ribulose 1,5-bisphosphate + O2 = 2-phosphoglycolate + (2R)-3-phosphoglycerate + 2 H(+). Its function is as follows. RuBisCO catalyzes two reactions: the carboxylation of D-ribulose 1,5-bisphosphate, the primary event in carbon dioxide fixation, as well as the oxidative fragmentation of the pentose substrate in the photorespiration process. Both reactions occur simultaneously and in competition at the same active site. In Gloeobacter violaceus (strain ATCC 29082 / PCC 7421), this protein is Ribulose bisphosphate carboxylase large chain.